Consider the following 403-residue polypeptide: MTAPFVPAAAHVRRFLKSSAGGAFFLLLASLAGFVLANSPWAAGYRTLTTLPLKFPFLGKRGPDNVAAWVSDGLMTLFFLVVILEIKKEIVSGHLSSLRRVALPLIGAVGGMVVPALTYLLVTWGHPEATSGWAIPVATDAAFTLPIILALGRRVSPGARAWLMALAIFDDVLGIVVIALFYGGSMYWPALLAVVLVTAALIGANRGRIRTLWAYGTGGILLWTALLDSGLHPTLAGVITGLCLPAGDAKGAATLDWVSSAVTPLVTWIVLPLFGFMNVGMSAAGMKPDMMLEAVPLGIMLGLMLGKPVGVFGATLLSIRLKVVMLPAGTSTGMLFGLSLLCGIGFTISLFVANLAFSGSDLIAPAKMGIFAGSALSALTGWFWLRFMPQNVTRPSEEGGFPR.

The next 11 helical transmembrane spans lie at 23-43 (AFFLLLASLAGFVLANSPWAA), 66-86 (VAAWVSDGLMTLFFLVVILEI), 101-121 (VALPLIGAVGGMVVPALTYLL), 132-152 (GWAIPVATDAAFTLPIILALG), 161-181 (AWLMALAIFDDVLGIVVIALF), 184-204 (GSMYWPALLAVVLVTAALIGA), 219-239 (GILLWTALLDSGLHPTLAGVI), 257-277 (WVSSAVTPLVTWIVLPLFGFM), 297-317 (LGIMLGLMLGKPVGVFGATLL), 333-353 (GMLFGLSLLCGIGFTISLFVA), and 363-383 (IAPAKMGIFAGSALSALTGWF).

The protein belongs to the NhaA Na(+)/H(+) (TC 2.A.33) antiporter family.

It localises to the cell inner membrane. The catalysed reaction is Na(+)(in) + 2 H(+)(out) = Na(+)(out) + 2 H(+)(in). Na(+)/H(+) antiporter that extrudes sodium in exchange for external protons. The sequence is that of Na(+)/H(+) antiporter NhaA from Gluconobacter oxydans (strain 621H) (Gluconobacter suboxydans).